A 345-amino-acid polypeptide reads, in one-letter code: S-adenosylmethionine:tRNA ribosyltransferase-isomerase (345 aa).

This sequence belongs to the QueA family. Monomer.

The protein resides in the cytoplasm. The enzyme catalyses 7-aminomethyl-7-carbaguanosine(34) in tRNA + S-adenosyl-L-methionine = epoxyqueuosine(34) in tRNA + adenine + L-methionine + 2 H(+). It participates in tRNA modification; tRNA-queuosine biosynthesis. Its function is as follows. Transfers and isomerizes the ribose moiety from AdoMet to the 7-aminomethyl group of 7-deazaguanine (preQ1-tRNA) to give epoxyqueuosine (oQ-tRNA). In Alkalilimnicola ehrlichii (strain ATCC BAA-1101 / DSM 17681 / MLHE-1), this protein is S-adenosylmethionine:tRNA ribosyltransferase-isomerase.